A 160-amino-acid chain; its full sequence is 3-dehydroquinate dehydratase (160 aa).

Residue Y28 is the Proton acceptor of the active site. The substrate site is built by N79, H85, and D92. The active-site Proton donor is H105. Residues 106-107 (MS) and R116 contribute to the substrate site.

Belongs to the type-II 3-dehydroquinase family. Homododecamer.

It catalyses the reaction 3-dehydroquinate = 3-dehydroshikimate + H2O. Its pathway is metabolic intermediate biosynthesis; chorismate biosynthesis; chorismate from D-erythrose 4-phosphate and phosphoenolpyruvate: step 3/7. Catalyzes a trans-dehydration via an enolate intermediate. This chain is 3-dehydroquinate dehydratase, found in Gloeobacter violaceus (strain ATCC 29082 / PCC 7421).